The chain runs to 250 residues: Homeobox protein Dlx4a (250 aa).

Positions 123-182 (IRKPRTIYSSLQLQALNQRFQQTQYLALPERADLAAKLGLTQTQVKIWFQNKRSKYKKIM) form a DNA-binding region, homeobox. A disordered region spans residues 182–202 (MKHGSSGPEGEHLQAASASGA).

The protein belongs to the distal-less homeobox family.

It localises to the nucleus. The protein is Homeobox protein Dlx4a (dlx4a) of Danio rerio (Zebrafish).